The sequence spans 395 residues: Thyrotropin-releasing hormone receptor (395 aa).

Over 1 to 30 the chain is Extracellular; the sequence is MENGTGDEQNHTGLLLSSQEFVTAEYQVVT. N-linked (GlcNAc...) asparagine glycosylation is found at N3 and N10. Residues 31-53 traverse the membrane as a helical segment; that stretch reads ILLVLLICGLGIVGNIMVVLVVL. The Cytoplasmic portion of the chain corresponds to 54-63; sequence RTKHMRTPTN. Residues 64 to 85 traverse the membrane as a helical segment; the sequence is CYLVSLAVADLMVLVAAGLPNI. Over 86–101 the chain is Extracellular; sequence TESLYKSWVYGYVGCL. A disulfide bridge links C100 with C181. The helical transmembrane segment at 102-123 threads the bilayer; it reads CITYLQYLGINASSFSITAFTI. Residues 124-146 lie on the Cytoplasmic side of the membrane; sequence ERYIAICHPIKAQFLCTFSRAKK. A helical membrane pass occupies residues 147–170; that stretch reads IIIFVWSFASVYCMLWFFLLDLNI. Over 171–195 the chain is Extracellular; the sequence is AVYKDTTVVSCGYKVSRSYYSPIYM. A helical transmembrane segment spans residues 196 to 217; that stretch reads MDFGIFYVLPMVLATVLYGLIA. Residues 218–268 are Cytoplasmic-facing; the sequence is RILFLNPIPSDPKENSNTWKNDMAQQNKTVNSKMTNKSFNSTIASRRQVTK. Residues 269 to 290 traverse the membrane as a helical segment; sequence MLAVVVVLFAFLWMPYRTLVVV. At 291–298 the chain is on the extracellular side; the sequence is NSFLSSPF. Residues 299–321 traverse the membrane as a helical segment; that stretch reads QENWFLLFCRICIYLNSAINPVI. The Cytoplasmic segment spans residues 322-395; the sequence is YNLMSQKFRA…IGDTCLSSEA (74 aa).

This sequence belongs to the G-protein coupled receptor 1 family.

Its subcellular location is the cell membrane. Its function is as follows. Receptor for thyrotropin-releasing hormone (TRH). Upon ligand binding, this G-protein-coupled receptor triggers activation of the phosphatidylinositol (IP3)-calcium-protein kinase C (PKC) pathway. This chain is Thyrotropin-releasing hormone receptor (TRHR), found in Gallus gallus (Chicken).